The chain runs to 456 residues: Bifunctional protein GlmU (456 aa).

A pyrophosphorylase region spans residues 1-229; sequence MSNSSMSVVI…LSEVEGVNNR (229 aa). UDP-N-acetyl-alpha-D-glucosamine-binding positions include 11-14, K25, Q76, 81-82, 103-105, G140, E154, N169, and N227; these read LAAG, GT, and YGD. D105 is a Mg(2+) binding site. Residue N227 coordinates Mg(2+). The interval 230-250 is linker; the sequence is LQLSALERVFQTEQAEKLLLA. Positions 251–456 are N-acetyltransferase; the sequence is GVMLLDPSRF…QGWKRPVKKK (206 aa). UDP-N-acetyl-alpha-D-glucosamine-binding residues include R333 and K351. Catalysis depends on H363, which acts as the Proton acceptor. Y366 and N377 together coordinate UDP-N-acetyl-alpha-D-glucosamine. Acetyl-CoA is bound by residues A380, 386-387, S405, A423, and R440; that span reads NY.

In the N-terminal section; belongs to the N-acetylglucosamine-1-phosphate uridyltransferase family. This sequence in the C-terminal section; belongs to the transferase hexapeptide repeat family. In terms of assembly, homotrimer. Mg(2+) is required as a cofactor.

Its subcellular location is the cytoplasm. It catalyses the reaction alpha-D-glucosamine 1-phosphate + acetyl-CoA = N-acetyl-alpha-D-glucosamine 1-phosphate + CoA + H(+). It carries out the reaction N-acetyl-alpha-D-glucosamine 1-phosphate + UTP + H(+) = UDP-N-acetyl-alpha-D-glucosamine + diphosphate. It participates in nucleotide-sugar biosynthesis; UDP-N-acetyl-alpha-D-glucosamine biosynthesis; N-acetyl-alpha-D-glucosamine 1-phosphate from alpha-D-glucosamine 6-phosphate (route II): step 2/2. It functions in the pathway nucleotide-sugar biosynthesis; UDP-N-acetyl-alpha-D-glucosamine biosynthesis; UDP-N-acetyl-alpha-D-glucosamine from N-acetyl-alpha-D-glucosamine 1-phosphate: step 1/1. The protein operates within bacterial outer membrane biogenesis; LPS lipid A biosynthesis. Catalyzes the last two sequential reactions in the de novo biosynthetic pathway for UDP-N-acetylglucosamine (UDP-GlcNAc). The C-terminal domain catalyzes the transfer of acetyl group from acetyl coenzyme A to glucosamine-1-phosphate (GlcN-1-P) to produce N-acetylglucosamine-1-phosphate (GlcNAc-1-P), which is converted into UDP-GlcNAc by the transfer of uridine 5-monophosphate (from uridine 5-triphosphate), a reaction catalyzed by the N-terminal domain. This chain is Bifunctional protein GlmU, found in Yersinia pseudotuberculosis serotype O:1b (strain IP 31758).